A 251-amino-acid chain; its full sequence is Probable transcriptional regulatory protein Amuc_0709 (251 aa).

The protein belongs to the TACO1 family.

It is found in the cytoplasm. The polypeptide is Probable transcriptional regulatory protein Amuc_0709 (Akkermansia muciniphila (strain ATCC BAA-835 / DSM 22959 / JCM 33894 / BCRC 81048 / CCUG 64013 / CIP 107961 / Muc)).